Reading from the N-terminus, the 438-residue chain is Serine hydroxymethyltransferase (438 aa).

Residues Leu-135 and Gly-139–Leu-141 contribute to the (6S)-5,6,7,8-tetrahydrofolate site. Lys-244 is subject to N6-(pyridoxal phosphate)lysine. The segment at Gly-361–Thr-383 is disordered.

It belongs to the SHMT family. As to quaternary structure, homodimer. Pyridoxal 5'-phosphate serves as cofactor.

It is found in the cytoplasm. It carries out the reaction (6R)-5,10-methylene-5,6,7,8-tetrahydrofolate + glycine + H2O = (6S)-5,6,7,8-tetrahydrofolate + L-serine. It participates in one-carbon metabolism; tetrahydrofolate interconversion. Its pathway is amino-acid biosynthesis; glycine biosynthesis; glycine from L-serine: step 1/1. Catalyzes the reversible interconversion of serine and glycine with tetrahydrofolate (THF) serving as the one-carbon carrier. This reaction serves as the major source of one-carbon groups required for the biosynthesis of purines, thymidylate, methionine, and other important biomolecules. Also exhibits THF-independent aldolase activity toward beta-hydroxyamino acids, producing glycine and aldehydes, via a retro-aldol mechanism. The protein is Serine hydroxymethyltransferase of Rhizorhabdus wittichii (strain DSM 6014 / CCUG 31198 / JCM 15750 / NBRC 105917 / EY 4224 / RW1) (Sphingomonas wittichii).